Consider the following 3674-residue polypeptide: Spectrin beta chain, non-erythrocytic 5 (3674 aa).

The disordered stretch occupies residues methionine 1–aspartate 37. An actin-binding region spans residues methionine 1–histidine 279. Calponin-homology (CH) domains lie at glutamine 54–glutamine 159 and leucine 177–serine 282. Spectrin repeat units follow at residues leucine 307–glutamine 416, alanine 428–valine 529, alanine 642–glutamine 742, valine 747–alanine 810, glycine 900–leucine 996, alanine 1103–glutamate 1206, glutamate 1209–leucine 1311, and glutamine 1315–glutamine 1417. The disordered stretch occupies residues alanine 1441–arginine 1469. Positions leucine 1442–arginine 1456 are enriched in polar residues. Spectrin repeat units follow at residues glutamate 1521–glutamine 1624, phenylalanine 1628–glutamate 1727, arginine 1731–aspartate 1835, valine 1842–glutamate 1940, leucine 1944–glutamine 2046, glutamine 2052–histidine 2146, leucine 2150–aspartate 2253, asparagine 2256–glutamate 2361, isoleucine 2366–aspartate 2467, glutamine 2471–glutamine 2574, glutamate 2577–glutamate 2680, glutamine 2683–glutamine 2784, arginine 2791–glutamate 2890, leucine 2894–glutamine 2997, glutamate 3000–glutamate 3103, glutamine 3106–alanine 3209, glutamate 3213–alanine 3311, alanine 3318–arginine 3415, and leucine 3422–leucine 3488. Residues threonine 3533 to alanine 3641 form the PH domain.

It belongs to the spectrin family. In terms of assembly, probably associates with an alpha chain. Interacts (via C-terminus) with TRPC4. As to expression, expressed at very low levels in many tissues, with strongest expression in cerebellum, spinal cord, stomach, pituitary gland, liver, pancreas, salivary gland, kidney, bladder, and heart.

It localises to the cytoplasm. It is found in the cytoskeleton. The protein is Spectrin beta chain, non-erythrocytic 5 (SPTBN5) of Homo sapiens (Human).